A 292-amino-acid polypeptide reads, in one-letter code: Nitrogenase iron protein 2 (292 aa).

ATP is bound at residue 8 to 15 (GKGGIGKS). C106 lines the [4Fe-4S] cluster pocket. Residue R109 is modified to ADP-ribosylarginine; by dinitrogenase reductase ADP-ribosyltransferase. A [4Fe-4S] cluster-binding site is contributed by C142.

Belongs to the NifH/BchL/ChlL family. In terms of assembly, homodimer. It depends on [4Fe-4S] cluster as a cofactor. In terms of processing, the reversible ADP-ribosylation of Arg-109 inactivates the nitrogenase reductase and regulates nitrogenase activity.

It catalyses the reaction N2 + 8 reduced [2Fe-2S]-[ferredoxin] + 16 ATP + 16 H2O = H2 + 8 oxidized [2Fe-2S]-[ferredoxin] + 2 NH4(+) + 16 ADP + 16 phosphate + 6 H(+). Its function is as follows. The key enzymatic reactions in nitrogen fixation are catalyzed by the nitrogenase complex, which has 2 components: the iron protein and the molybdenum-iron protein. The polypeptide is Nitrogenase iron protein 2 (nifH2) (Methanothermococcus thermolithotrophicus (Methanococcus thermolithotrophicus)).